The primary structure comprises 501 residues: MEFSFSSPLLYILYFLLFFIVRQLLKPKSNRKLPPGPRTLPIIGNLHQLRGSLPHRTLKKLSDKHGPLMHLKMGERSAIIVSDARMAKIVLHNHGLAVADRSVNTVASIMTYNSLGVTFAQYGDYLTKLRQIYTLELLSPKKVRSFYNCFEDELDVFVKSIRSQVGQPMVLYEKVSTYLYATICRTIFGSVCKEREKMIKIVKRTSLLSGTPLRMEDLFPSMRVFCRFSKTLNQLRGLLQEMDGILEDIIVEREKTTEILKEAKDDEDMLSVLLRHKWYNPSGARFRITNADIKAIIFELILAATLSVADVVEWAMVEILRHPAILKKVYDEGRGICKEKKRVTGYDVEKMEYMRLCVKESTRVHPAAPLLVPRECREDFEVDGYTVPKGAWVLTNCWAIQMDPEIWPEPEKFDPERYIRNPMDFYGSNFELIPFGTGRRGCPGILYGVTNAELLLAAMFYHFDWEIADGKKPEDIDLTENFGAGCIMKYPLTLVPHLANE.

Residues 1 to 21 (MEFSFSSPLLYILYFLLFFIV) form a helical membrane-spanning segment. C442 is a binding site for heme.

It belongs to the cytochrome P450 family. Heme is required as a cofactor.

The protein resides in the membrane. The catalysed reaction is (19E)-geissoschizine + reduced [NADPH--hemoprotein reductase] + O2 = akuammicine + formate + oxidized [NADPH--hemoprotein reductase] + H2O + H(+). It functions in the pathway alkaloid biosynthesis. A cytochrome P450 monooxygenase involved in the biosynthesis of strychnos monoterpene indole alkaloids (MIAs) natural products, compounds with effects on glucose absorption. Catalyzes the conversion of geissoschizine to akuammicine. The chain is Geissoschizine oxidase from Alstonia scholaris (Dogbane).